Here is a 145-residue protein sequence, read N- to C-terminus: Large ribosomal subunit protein bL35c (145 aa).

A chloroplast-targeting transit peptide spans 1–56; the sequence is MASLSMASVNVSFCHPLRSSSPKVSLRSSVHFATSLSSSHSISGLRAVLPLKISTV.

The protein belongs to the bacterial ribosomal protein bL35 family. In terms of assembly, part of the 50S ribosomal subunit.

It localises to the plastid. The protein localises to the chloroplast. The chain is Large ribosomal subunit protein bL35c from Arabidopsis thaliana (Mouse-ear cress).